A 478-amino-acid polypeptide reads, in one-letter code: Succinyl-CoA:acetate/propanoyl-CoA:succinate CoA transferase (478 aa).

Residues 1–30 (MYQLAFLRCRYASPIVREARRAFHASRKCQ) constitute a mitochondrion transit peptide. 256 to 260 (GIGAI) provides a ligand contact to CoA. Residue E279 is the 5-glutamyl coenzyme A thioester intermediate of the active site. CoA contacts are provided by I354, G377, and K404.

This sequence belongs to the acetyl-CoA hydrolase/transferase family.

It is found in the mitochondrion. The catalysed reaction is succinyl-CoA + acetate = succinate + acetyl-CoA. The enzyme catalyses propanoyl-CoA + succinate = propanoate + succinyl-CoA. Its function is as follows. Transferase involved in anaerobic fumarate-respiration in the mitochondria. Catalyzes the transfer of the CoA moiety of acetyl-CoA or propionyl-CoA to succinate, thereby forming acetate and propionate, respectively. Acetate and propionate are the two major metabolic end products in the anaerobic mitochondrial metabolism of F.hepatica. Also displays CoA transferase activities from acetyl-CoA to propionate, acetate and butyrate. The chain is Succinyl-CoA:acetate/propanoyl-CoA:succinate CoA transferase from Fasciola hepatica (Liver fluke).